Here is a 1362-residue protein sequence, read N- to C-terminus: Insulin receptor (1362 aa).

Positions 1–37 (MGQGVLRGEGHPNNNPNSKVGWKSLVGIITIFMLILC) are cleaved as a signal peptide. Positions 38-184 (DQSDGKICYS…DSVEDNYIEL (147 aa)) are leucine-rich region. Cys-45 and Cys-63 are joined by a disulfide. 3 N-linked (GlcNAc...) asparagine glycosylation sites follow: Asn-53, Asn-115, and Asn-148. 14 disulfides stabilise this stretch: Cys-163/Cys-192, Cys-196/Cys-219, Cys-206/Cys-225, Cys-229/Cys-238, Cys-233/Cys-244, Cys-245/Cys-253, Cys-249/Cys-262, Cys-265/Cys-274, Cys-278/Cys-290, Cys-296/Cys-321, Cys-303/Cys-311, Cys-325/Cys-338, Cys-341/Cys-345, and Cys-349/Cys-370. Residue Asn-332 is glycosylated (N-linked (GlcNAc...) asparagine). N-linked (GlcNAc...) asparagine glycosylation is found at Asn-374, Asn-434, and Asn-455. Cys-472 and Cys-505 form a disulfide bridge. Fibronectin type-III domains are found at residues 508-629 (NLLT…TNET) and 633-730 (VPLD…IQKE). N-linked (GlcNAc...) asparagine glycosylation is found at Asn-551, Asn-627, Asn-642, Asn-660, and Asn-707. Disulfide bonds link Cys-683–Cys-896 and Cys-822–Cys-830. Residues 694-714 (WTPPTEIDENGNENQTEHTSV) form a disordered region. Positions 705 to 714 (NENQTEHTSV) are enriched in polar residues. The segment at 741–749 (ENYLHNEVF) is insulin-binding. Topologically, residues 759–951 (DLFGVANGTL…PDHPHSNIVK (193 aa)) are extracellular. 2 N-linked (GlcNAc...) asparagine glycosylation sites follow: Asn-765 and Asn-779. The region spanning 849-944 (VVGPITYEYV…EQAYFQVPDH (96 aa)) is the Fibronectin type-III 3 domain. Asn-917 and Asn-930 each carry an N-linked (GlcNAc...) asparagine glycan. The helical transmembrane segment at 952–972 (IITGPIIAVFLLLIVLVYCVV) threads the bilayer. Over 973–1362 (QKKKDAEGPA…ILSLPRSSPS (390 aa)) the chain is Cytoplasmic. Phosphotyrosine; by autocatalysis is present on Tyr-993. Residues 1012–1287 (INLLRELGQG…MLKDDLRPSF (276 aa)) form the Protein kinase domain. Residues Ser-1022, Lys-1046, and 1093–1099 (ELMAHGD) each bind ATP. Asp-1148 acts as the Proton donor/acceptor in catalysis. ATP is bound by residues 1152–1153 (RN) and Asp-1166. Tyr-1174, Tyr-1178, Tyr-1179, Tyr-1335, and Tyr-1341 each carry phosphotyrosine; by autocatalysis.

Belongs to the protein kinase superfamily. Tyr protein kinase family. Insulin receptor subfamily. Tetramer of 2 alpha and 2 beta chains linked by disulfide bonds. The alpha chains contribute to the formation of the ligand-binding domain, while the beta chains carry the kinase domain. In terms of processing, autophosphorylated on tyrosine residues in response to insulin. Localized mainly to the envelope in oocytes. Localized to the animal hemisphere during early embryonic cleavage. Expressed during organogenesis in regions of ecto- and mesodermic origins. Expressed in the entire encephalon, the otic and optic vesicles, the gills, the somites and the pronephric tubules of the embryo. Also found in adult liver, muscle and regenerated forelimbs.

The protein resides in the cell membrane. The catalysed reaction is L-tyrosyl-[protein] + ATP = O-phospho-L-tyrosyl-[protein] + ADP + H(+). Autophosphorylation activates the kinase activity. Receptor tyrosine kinase which mediates actions of insulin. May be required for forelimb regeneration. This Xenopus laevis (African clawed frog) protein is Insulin receptor (insr).